The following is an 84-amino-acid chain: Molybdopterin synthase sulfur carrier subunit (84 aa).

1-thioglycine; alternate is present on Gly84. Gly84 is subject to Glycyl adenylate; alternate.

The protein belongs to the MoaD family. MOCS2A subfamily. In terms of assembly, heterotetramer; composed of 2 small (MOCS2A) and 2 large (MOCS2B) subunits. Post-translationally, C-terminal thiocarboxylation occurs in 2 steps, it is first acyl-adenylated (-COAMP) via the hesA/moeB/thiF part of MOCS3, then thiocarboxylated (-COSH) via the rhodanese domain of MOCS3.

It is found in the cytoplasm. It participates in cofactor biosynthesis; molybdopterin biosynthesis. In terms of biological role, acts as a sulfur carrier required for molybdopterin biosynthesis. Component of the molybdopterin synthase complex that catalyzes the conversion of precursor Z into molybdopterin by mediating the incorporation of 2 sulfur atoms into precursor Z to generate a dithiolene group. In the complex, serves as sulfur donor by being thiocarboxylated (-COSH) at its C-terminus by MOCS3. After interaction with MOCS2B, the sulfur is then transferred to precursor Z to form molybdopterin. The sequence is that of Molybdopterin synthase sulfur carrier subunit from Caenorhabditis briggsae.